A 199-amino-acid chain; its full sequence is Octanoyltransferase (199 aa).

A BPL/LPL catalytic domain is found at S27–K199. Substrate-binding positions include R66–H73, S133–G135, and G146–A148. C164 functions as the Acyl-thioester intermediate in the catalytic mechanism.

Belongs to the LipB family.

It localises to the cytoplasm. It carries out the reaction octanoyl-[ACP] + L-lysyl-[protein] = N(6)-octanoyl-L-lysyl-[protein] + holo-[ACP] + H(+). The protein operates within protein modification; protein lipoylation via endogenous pathway; protein N(6)-(lipoyl)lysine from octanoyl-[acyl-carrier-protein]: step 1/2. Catalyzes the transfer of endogenously produced octanoic acid from octanoyl-acyl-carrier-protein onto the lipoyl domains of lipoate-dependent enzymes. Lipoyl-ACP can also act as a substrate although octanoyl-ACP is likely to be the physiological substrate. This chain is Octanoyltransferase, found in Legionella pneumophila (strain Lens).